We begin with the raw amino-acid sequence, 227 residues long: Phosphoribosylformylglycinamidine synthase subunit PurQ (227 aa).

The Glutamine amidotransferase type-1 domain maps to 2 to 227 (RWAIVRFPGA…FLGLVREVAR (226 aa)). Cys-85 serves as the catalytic Nucleophile. Residues His-200 and Glu-202 contribute to the active site.

In terms of assembly, part of the FGAM synthase complex composed of 1 PurL, 1 PurQ and 2 PurS subunits.

It is found in the cytoplasm. It carries out the reaction N(2)-formyl-N(1)-(5-phospho-beta-D-ribosyl)glycinamide + L-glutamine + ATP + H2O = 2-formamido-N(1)-(5-O-phospho-beta-D-ribosyl)acetamidine + L-glutamate + ADP + phosphate + H(+). The catalysed reaction is L-glutamine + H2O = L-glutamate + NH4(+). The protein operates within purine metabolism; IMP biosynthesis via de novo pathway; 5-amino-1-(5-phospho-D-ribosyl)imidazole from N(2)-formyl-N(1)-(5-phospho-D-ribosyl)glycinamide: step 1/2. Its function is as follows. Part of the phosphoribosylformylglycinamidine synthase complex involved in the purines biosynthetic pathway. Catalyzes the ATP-dependent conversion of formylglycinamide ribonucleotide (FGAR) and glutamine to yield formylglycinamidine ribonucleotide (FGAM) and glutamate. The FGAM synthase complex is composed of three subunits. PurQ produces an ammonia molecule by converting glutamine to glutamate. PurL transfers the ammonia molecule to FGAR to form FGAM in an ATP-dependent manner. PurS interacts with PurQ and PurL and is thought to assist in the transfer of the ammonia molecule from PurQ to PurL. This Thermus thermophilus (strain ATCC BAA-163 / DSM 7039 / HB27) protein is Phosphoribosylformylglycinamidine synthase subunit PurQ.